The chain runs to 354 residues: Thiamine thiazole synthase 2, chloroplastic (354 aa).

Residues 1–44 constitute a chloroplast transit peptide; the sequence is MATTAASSLLKSSFAGSRLPSATRTTTPSSVAVATPRAGGGPIR. The segment at 17–49 is disordered; it reads SRLPSATRTTTPSSVAVATPRAGGGPIRASISS. The span at 20–32 shows a compositional bias: polar residues; it reads PSATRTTTPSSVA. Substrate is bound by residues Ala97, 117 to 118, Gly125, and Val190; that span reads EQ. A 2,3-didehydroalanine (Cys) modification is found at Cys219. Residues Asp221, His236, Met288, and 298–300 contribute to the substrate site; that span reads RMG.

It belongs to the THI4 family. Homooctamer. The cofactor is Fe cation. In terms of processing, during the catalytic reaction, a sulfide is transferred from Cys-219 to a reaction intermediate, generating a dehydroalanine residue. As to expression, highest expression in developing embryos and green leaves and a very low level expression seen in endosperm, roots, etiolated shoots and immature ears.

It is found in the plastid. The protein localises to the chloroplast. It carries out the reaction [ADP-thiazole synthase]-L-cysteine + glycine + NAD(+) = [ADP-thiazole synthase]-dehydroalanine + ADP-5-ethyl-4-methylthiazole-2-carboxylate + nicotinamide + 3 H2O + 2 H(+). Involved in biosynthesis of the thiamine precursor thiazole. Catalyzes the conversion of NAD and glycine to adenosine diphosphate 5-(2-hydroxyethyl)-4-methylthiazole-2-carboxylic acid (ADT), an adenylated thiazole intermediate. The reaction includes an iron-dependent sulfide transfer from a conserved cysteine residue of the protein to a thiazole intermediate. The enzyme can only undergo a single turnover, which suggests it is a suicide enzyme. May have additional roles in adaptation to various stress conditions and in DNA damage tolerance. The chain is Thiamine thiazole synthase 2, chloroplastic from Zea mays (Maize).